The sequence spans 261 residues: Cytochrome c oxidase subunit 3 (261 aa).

Residues 1–15 lie on the Mitochondrial matrix side of the membrane; it reads MTHQTHAYHMVNPSP. A helical transmembrane segment spans residues 16–34; the sequence is WPLTGALSALLMTSGLAMW. Topologically, residues 35–40 are mitochondrial intermembrane; that stretch reads FHFNST. The chain crosses the membrane as a helical span at residues 41 to 66; that stretch reads LLLAMGLLTNILTMYQWWRDIIREST. Topologically, residues 67-72 are mitochondrial matrix; that stretch reads FQGHHT. Residues 73–105 traverse the membrane as a helical segment; it reads SIVQKGLRYGMILFIISEVFFFSGFFWAFYHSS. Topologically, residues 106 to 128 are mitochondrial intermembrane; the sequence is LAPTPELGGCWPPTGIHPLNPLE. The chain crosses the membrane as a helical span at residues 129–152; the sequence is VPLLNTSVLLASGVSITWAHHSLM. The Mitochondrial matrix portion of the chain corresponds to 153-155; sequence EGN. A helical membrane pass occupies residues 156–183; that stretch reads RKNMLQGLFITISLGVYFTLLQASEYYE. The Mitochondrial intermembrane segment spans residues 184–190; sequence ASFTISD. The helical transmembrane segment at 191 to 223 threads the bilayer; sequence GVYGSTFFVATGFHGLHVIIGSTFLIVCFLRQL. The Mitochondrial matrix portion of the chain corresponds to 224 to 232; that stretch reads KFHFTSSHH. The chain crosses the membrane as a helical span at residues 233–256; the sequence is FGFEAAAWYWHFVDVVWLFLYVSI. Over 257 to 261 the chain is Mitochondrial intermembrane; that stretch reads YWWGS.

Belongs to the cytochrome c oxidase subunit 3 family. In terms of assembly, component of the cytochrome c oxidase (complex IV, CIV), a multisubunit enzyme composed of 14 subunits. The complex is composed of a catalytic core of 3 subunits MT-CO1, MT-CO2 and MT-CO3, encoded in the mitochondrial DNA, and 11 supernumerary subunits COX4I, COX5A, COX5B, COX6A, COX6B, COX6C, COX7A, COX7B, COX7C, COX8 and NDUFA4, which are encoded in the nuclear genome. The complex exists as a monomer or a dimer and forms supercomplexes (SCs) in the inner mitochondrial membrane with NADH-ubiquinone oxidoreductase (complex I, CI) and ubiquinol-cytochrome c oxidoreductase (cytochrome b-c1 complex, complex III, CIII), resulting in different assemblies (supercomplex SCI(1)III(2)IV(1) and megacomplex MCI(2)III(2)IV(2)).

The protein localises to the mitochondrion inner membrane. The enzyme catalyses 4 Fe(II)-[cytochrome c] + O2 + 8 H(+)(in) = 4 Fe(III)-[cytochrome c] + 2 H2O + 4 H(+)(out). Its function is as follows. Component of the cytochrome c oxidase, the last enzyme in the mitochondrial electron transport chain which drives oxidative phosphorylation. The respiratory chain contains 3 multisubunit complexes succinate dehydrogenase (complex II, CII), ubiquinol-cytochrome c oxidoreductase (cytochrome b-c1 complex, complex III, CIII) and cytochrome c oxidase (complex IV, CIV), that cooperate to transfer electrons derived from NADH and succinate to molecular oxygen, creating an electrochemical gradient over the inner membrane that drives transmembrane transport and the ATP synthase. Cytochrome c oxidase is the component of the respiratory chain that catalyzes the reduction of oxygen to water. Electrons originating from reduced cytochrome c in the intermembrane space (IMS) are transferred via the dinuclear copper A center (CU(A)) of subunit 2 and heme A of subunit 1 to the active site in subunit 1, a binuclear center (BNC) formed by heme A3 and copper B (CU(B)). The BNC reduces molecular oxygen to 2 water molecules using 4 electrons from cytochrome c in the IMS and 4 protons from the mitochondrial matrix. The chain is Cytochrome c oxidase subunit 3 (MT-CO3) from Equus caballus (Horse).